A 631-amino-acid chain; its full sequence is Iron transport multicopper oxidase FET3 (631 aa).

An N-terminal signal peptide occupies residues 1-25 (MKVSTHHFLPSLLVALWSWATVAQA). Residues 26 to 564 (ATHTFNWTTG…ANIPDGFTAK (539 aa)) are Extracellular-facing. N31 and N81 each carry an N-linked (GlcNAc...) asparagine glycan. Plastocyanin-like domains follow at residues 50 to 148 (ITCN…LVVE) and 195 to 297 (NLII…LMLN). Residues H85 and H87 each coordinate Cu cation. Residues N92 and N117 are each glycosylated (N-linked (GlcNAc...) asparagine). H130 and H132 together coordinate Cu cation. Residues N199, N203, N249, N270, N297, N364, and N413 are each glycosylated (N-linked (GlcNAc...) asparagine). One can recognise a Plastocyanin-like 3 domain in the interval 387–506 (NPLVYGTNTN…QGLALLLIEA (120 aa)). Residues H418, H421, H423, H488, C489, H490, and H494 each contribute to the Cu cation site. A helical transmembrane segment spans residues 565–585 (GIVAMTFSCLAGVLGLISLST). Over 586 to 630 (YGLMGVKKSEEEIIRDLGMDPDAVEKVDVSDINSDEDSSRTSKNI) the chain is Cytoplasmic. The tract at residues 610 to 631 (EKVDVSDINSDEDSSRTSKNIE) is disordered. Residues 622–631 (DSSRTSKNIE) show a composition bias toward basic and acidic residues.

Belongs to the multicopper oxidase family. The cofactor is Cu cation.

Its subcellular location is the cell membrane. Functionally, iron transport multicopper ferroxidase required for Fe(2+) high affinity uptake. Required to oxidize Fe(2+) and release it from the transporter. Essential component of copper-dependent iron transport. The protein is Iron transport multicopper oxidase FET3 (FET3) of Kluyveromyces lactis (strain ATCC 8585 / CBS 2359 / DSM 70799 / NBRC 1267 / NRRL Y-1140 / WM37) (Yeast).